Reading from the N-terminus, the 513-residue chain is U3 small nucleolar RNA-associated protein 15 (513 aa).

6 WD repeats span residues 37–78, 79–118, 124–162, 166–206, 210–247, and 250–294; these read KEHN…KTFS, RFKDVVYSASFRSDGKLLCAGDATGLVSVYDSYNPRTILL, THPTHVTKFHTQDNKILATASDDRVTRLWDISNAYEPQL, GATD…STPI, NHDQPVENVIAVSPTQIVSCGGNNFKVWDLTSNKKLYE, and NFNK…QVKF. Residues 332–354 form a disordered region; that stretch reads KKKEKRSSDKENAPASFNKNAKS.

As to quaternary structure, interacts with snoRNA U3. Interacts with MPP10. Component of the ribosomal small subunit (SSU) processome composed of at least 40 protein subunits and snoRNA U3. In the absence of snoRNA3, forms a complex with other t-UTPs. This complex can associate with pre-18S ribosomal RNAs.

It localises to the nucleus. Its subcellular location is the nucleolus. Involved in nucleolar processing of pre-18S ribosomal RNA. Required for optimal pre-ribosomal RNA transcription by RNA polymerase I together with a subset of U3 proteins required for transcription (t-UTPs). The sequence is that of U3 small nucleolar RNA-associated protein 15 (UTP15) from Saccharomyces cerevisiae (strain ATCC 204508 / S288c) (Baker's yeast).